A 140-amino-acid polypeptide reads, in one-letter code: Protein NrdI (140 aa).

Belongs to the NrdI family.

Functionally, probably involved in ribonucleotide reductase function. In Photorhabdus laumondii subsp. laumondii (strain DSM 15139 / CIP 105565 / TT01) (Photorhabdus luminescens subsp. laumondii), this protein is Protein NrdI.